Reading from the N-terminus, the 446-residue chain is WD repeat domain phosphoinositide-interacting protein 1 (446 aa).

The Nuclear receptor interaction motif lies at 131 to 136 (LLKTVL). Residues 184 to 224 (AHEGTLAAITFNSSGSKLASASEKGTVIRVFSVPEGQKLYE) form a WD 1 repeat. The L/FRRG motif motif lies at 225-228 (FRRG). WD repeat units lie at residues 230–269 (KRYV…DSRP) and 312–351 (SGQK…GGEC). The tract at residues 386-406 (ARPSTSAASTVPGYSEDGGAL) is disordered.

This sequence belongs to the WD repeat PROPPIN family. Interacts with androgen receptor (AR) and the estrogen receptors ESR1 and ESR2. Interacts with WIPI2. Interacts with WDR45. Interacts with ATG16L1. May interact with NUDC.

It localises to the golgi apparatus. Its subcellular location is the trans-Golgi network. It is found in the endosome. The protein resides in the cytoplasmic vesicle. The protein localises to the clathrin-coated vesicle. It localises to the preautophagosomal structure membrane. Its subcellular location is the cytoplasm. It is found in the cytoskeleton. In terms of biological role, component of the autophagy machinery that controls the major intracellular degradation process by which cytoplasmic materials are packaged into autophagosomes and delivered to lysosomes for degradation. Plays an important role in starvation- and calcium-mediated autophagy, as well as in mitophagy. Functions downstream of the ULK1 and PI3-kinases that produce phosphatidylinositol 3-phosphate (PtdIns3P) on membranes of the endoplasmic reticulum once activated. Binds phosphatidylinositol 3-phosphate (PtdIns3P), and maybe other phosphoinositides including PtdIns3,5P2 and PtdIns5P, and is recruited to phagophore assembly sites at the endoplasmic reticulum membranes. There, it assists WIPI2 in the recruitment of ATG12-ATG5-ATG16L1, a complex that directly controls the elongation of the nascent autophagosomal membrane. Together with WDR45/WIPI4, promotes ATG2 (ATG2A or ATG2B)-mediated lipid transfer by enhancing ATG2-association with phosphatidylinositol 3-monophosphate (PI3P)-containing membranes. Involved in xenophagy of Staphylococcus aureus. Invading S.aureus cells become entrapped in autophagosome-like WIPI1 positive vesicles targeted for lysosomal degradation. Also plays a distinct role in controlling the transcription of melanogenic enzymes and melanosome maturation, a process that is distinct from starvation-induced autophagy. May also regulate the trafficking of proteins involved in the mannose-6-phosphate receptor (MPR) recycling pathway. The protein is WD repeat domain phosphoinositide-interacting protein 1 (Wipi1) of Mus musculus (Mouse).